An 825-amino-acid chain; its full sequence is Probable ATP-dependent RNA helicase DDX20 (825 aa).

Residues 27–50 (PVQAVEPTPASPWTQRTAHDIGGP) are disordered. Positions 63 to 91 (ADFESLLLSRPVLEGLRAAGFERPSPVQL) match the Q motif motif. Residues R85, Q90, 107–114 (AKSGTGKT), and 110–115 (GTGKTC) contribute to the ATP site. The Helicase ATP-binding domain maps to 94–265 (IPLGRCGLDL…TRYMRDPTFV (172 aa)). At S188 the chain carries Phosphoserine. The short motif at 212–215 (DEAD) is the DEAD box element. S270 carries the phosphoserine modification. In terms of domain architecture, Helicase C-terminal spans 300 to 449 (HLQELFSKVP…PIPPGLMEEC (150 aa)). Composition is skewed to polar residues over residues 465–475 (SPTVATQSPKK) and 484–504 (FQSQ…SASA). 2 disordered regions span residues 465 to 573 (SPTV…PGSL) and 642 to 753 (QMLV…EPQE). 3 positions are modified to phosphoserine: S472, S501, and S506. A compositionally biased stretch (basic residues) spans 508-518 (RPKHSKPKLPV). A compositionally biased stretch (polar residues) spans 547–571 (KNSVQTSVEDSSSNSQHQAKDSSPG). T552 bears the Phosphothreonine mark. Phosphoserine occurs at positions 561, 653, 655, 657, 673, 678, and 679. A compositionally biased stretch (low complexity) spans 646-668 (SSSQSGDSESDSDSCSSRTSSQS). 2 positions are modified to phosphothreonine: T689 and T706. Polar residues predominate over residues 698 to 711 (EQVQNGNDTPTQVE). A compositionally biased stretch (basic residues) spans 733-744 (KQSRRNPARRSS).

The protein belongs to the DEAD box helicase family. DDX20 subfamily. Part of the core SMN complex that contains SMN1, GEMIN2/SIP1, DDX20/GEMIN3, GEMIN4, GEMIN5, GEMIN6, GEMIN7, GEMIN8 and STRAP/UNRIP. Part of the SMN-Sm complex that contains SMN1, GEMIN2/SIP1, DDX20/GEMIN3, GEMIN4, GEMIN5, GEMIN6, GEMIN7, GEMIN8, STRAP/UNRIP and the Sm proteins SNRPB, SNRPD1, SNRPD2, SNRPD3, SNRPE, SNRPF and SNRPG. Interacts with SMN1; the interaction is direct. Interacts with GEMIN4; the interaction is direct. Interacts with GEMIN5. Interacts with SNUPN; the interaction is direct. Interacts with PPP4R2. Interacts with FOXL2. Interacts with NANOS1 and PUM2.

It is found in the cytoplasm. It localises to the nucleus. Its subcellular location is the gem. The enzyme catalyses ATP + H2O = ADP + phosphate + H(+). It carries out the reaction a ribonucleoside 5'-triphosphate + H2O = a ribonucleoside 5'-diphosphate + phosphate + H(+). Functionally, the SMN complex catalyzes the assembly of small nuclear ribonucleoproteins (snRNPs), the building blocks of the spliceosome, and thereby plays an important role in the splicing of cellular pre-mRNAs. Most spliceosomal snRNPs contain a common set of Sm proteins SNRPB, SNRPD1, SNRPD2, SNRPD3, SNRPE, SNRPF and SNRPG that assemble in a heptameric protein ring on the Sm site of the small nuclear RNA to form the core snRNP (Sm core). In the cytosol, the Sm proteins SNRPD1, SNRPD2, SNRPE, SNRPF and SNRPG are trapped in an inactive 6S pICln-Sm complex by the chaperone CLNS1A that controls the assembly of the core snRNP. To assemble core snRNPs, the SMN complex accepts the trapped 5Sm proteins from CLNS1A forming an intermediate. Binding of snRNA inside 5Sm triggers eviction of the SMN complex, thereby allowing binding of SNRPD3 and SNRPB to complete assembly of the core snRNP. May also play a role in the metabolism of small nucleolar ribonucleoprotein (snoRNPs). This chain is Probable ATP-dependent RNA helicase DDX20 (Ddx20), found in Mus musculus (Mouse).